Consider the following 345-residue polypeptide: GDP-mannose transporter (345 aa).

At 1 to 8 (MDNHMLNR) the chain is on the cytoplasmic side. The chain crosses the membrane as a helical span at residues 9–29 (ISKSPILPVVSYCMASILMTL). Over 30–40 (TNKYVLSSPGY) the chain is Lumenal. A helical transmembrane segment spans residues 41–61 (NMNFLLLTVQSTVCVAAIGIL). Over 62-78 (KRLKVINYRDFDFREAK) the chain is Cytoplasmic. Residues 79–101 (FWFPISFLLVAMIYTASKALQFL) traverse the membrane as a helical segment. Residues 102-104 (SVP) lie on the Lumenal side of the membrane. Residues 105 to 127 (VYTIFKNLTIIIIAYGEVLWFGG) traverse the membrane as a helical segment. The Cytoplasmic portion of the chain corresponds to 128–131 (HVTA). A helical transmembrane segment spans residues 132–150 (LTLFSFGLMVLSSIVAAWA). Topologically, residues 151 to 161 (DIQSSSFASQT) are lumenal. The helical transmembrane segment at 162–182 (LNSGYLWMVLNCLTNAAFVLA) threads the bilayer. The Cytoplasmic portion of the chain corresponds to 183-194 (MRKRIKLTNFRD). The helical transmembrane segment at 195–215 (FDTMFYNNLLSIPVLVICTLF) threads the bilayer. Residues 216-233 (TEDWSAENIAQNFPPDAK) are Lumenal-facing. A helical transmembrane segment spans residues 234–254 (FGVLMAMAISGVSSVGISYTS). Topologically, residues 255 to 264 (AWCVRVTSST) are cytoplasmic. Residues 265 to 285 (TYSMVGALNKLPLAIAGLVFF) traverse the membrane as a helical segment. The Lumenal segment spans residues 286–288 (DAP). A helical membrane pass occupies residues 289 to 309 (ITFGSVTAILLGFISGVVYAV). Topologically, residues 310-345 (AKSQQQRQKDPATILPMTHNPVSASSQSMRDSLSKS) are cytoplasmic. The interval 319–345 (DPATILPMTHNPVSASSQSMRDSLSKS) is disordered. Residues 329 to 345 (NPVSASSQSMRDSLSKS) show a composition bias toward polar residues.

The protein belongs to the TPT transporter family. SLC35D subfamily. As to quaternary structure, homooligomer.

It is found in the golgi apparatus membrane. Its subcellular location is the cytoplasmic vesicle membrane. It localises to the endoplasmic reticulum membrane. Involved in the import of GDP-mannose from the cytoplasm into the Golgi lumen. This chain is GDP-mannose transporter (vrg4), found in Schizosaccharomyces pombe (strain 972 / ATCC 24843) (Fission yeast).